The sequence spans 167 residues: Putative peroxiredoxin-A (167 aa).

The Thioredoxin domain occupies 4–167 (IKRGDRFPTT…STAQKIIAKL (164 aa)). Catalysis depends on C53, which acts as the Cysteine sulfenic acid (-SOH) intermediate. The Microbody targeting signal motif lies at 165–167 (AKL).

The protein belongs to the peroxiredoxin family. Prx5 subfamily.

It is found in the peroxisome membrane. It carries out the reaction a hydroperoxide + [thioredoxin]-dithiol = an alcohol + [thioredoxin]-disulfide + H2O. Thiol-specific peroxidase that catalyzes the reduction of hydrogen peroxide and organic hydroperoxides to water and alcohols, respectively. Plays a role in cell protection against oxidative stress by detoxifying peroxides and as sensor of hydrogen peroxide-mediated signaling events. The sequence is that of Putative peroxiredoxin-A (PMPA) from Candida boidinii (Yeast).